A 339-amino-acid polypeptide reads, in one-letter code: Phosphoribosylformylglycinamidine cyclo-ligase (339 aa).

It belongs to the AIR synthase family.

The protein localises to the cytoplasm. The enzyme catalyses 2-formamido-N(1)-(5-O-phospho-beta-D-ribosyl)acetamidine + ATP = 5-amino-1-(5-phospho-beta-D-ribosyl)imidazole + ADP + phosphate + H(+). It functions in the pathway purine metabolism; IMP biosynthesis via de novo pathway; 5-amino-1-(5-phospho-D-ribosyl)imidazole from N(2)-formyl-N(1)-(5-phospho-D-ribosyl)glycinamide: step 2/2. The sequence is that of Phosphoribosylformylglycinamidine cyclo-ligase from Streptococcus thermophilus (strain ATCC BAA-250 / LMG 18311).